Reading from the N-terminus, the 283-residue chain is Pantothenate synthetase (283 aa).

ATP is bound at residue 30-37 (MGNLHAGH). Histidine 37 functions as the Proton donor in the catalytic mechanism. Residue glutamine 61 coordinates (R)-pantoate. Glutamine 61 serves as a coordination point for beta-alanine. 149 to 152 (GEKD) is an ATP binding site. Glutamine 155 is a (R)-pantoate binding site. ATP is bound by residues valine 178 and 186–189 (LSSR).

The protein belongs to the pantothenate synthetase family. Homodimer.

Its subcellular location is the cytoplasm. It catalyses the reaction (R)-pantoate + beta-alanine + ATP = (R)-pantothenate + AMP + diphosphate + H(+). It participates in cofactor biosynthesis; (R)-pantothenate biosynthesis; (R)-pantothenate from (R)-pantoate and beta-alanine: step 1/1. Functionally, catalyzes the condensation of pantoate with beta-alanine in an ATP-dependent reaction via a pantoyl-adenylate intermediate. The polypeptide is Pantothenate synthetase (Pseudomonas aeruginosa (strain UCBPP-PA14)).